We begin with the raw amino-acid sequence, 305 residues long: FMRFamide-related peptides type HF-4 (305 aa).

The N-terminal stretch at 1–19 (MTSLCLTIAPAVLSLICLS) is a signal peptide. Residues Phe36, Phe47, and Phe66 each carry the phenylalanine amide modification. At Ile75 the chain carries Isoleucine amide. Phe84 and Phe93 each carry phenylalanine amide. Ile102 is modified (isoleucine amide). Phenylalanine amide occurs at positions 111, 120, 129, 138, 147, 156, and 165. A propeptide spanning residues 168 to 305 (SVDGEIEAGV…EHKQEYMRFG (138 aa)) is cleaved from the precursor.

The protein belongs to the FARP (FMRFamide related peptide) family. Central nervous system.

The protein localises to the secreted. Functionally, can function as both cardioregulatory hormones and transmitters and may regulate cardiovascular function. The chain is FMRFamide-related peptides type HF-4 from Cornu aspersum (Brown garden snail).